Consider the following 412-residue polypeptide: 1-deoxy-D-xylulose 5-phosphate reductoisomerase (412 aa).

Threonine 5, glycine 6, serine 7, isoleucine 8, glycine 31, asparagine 33, and asparagine 125 together coordinate NADPH. A 1-deoxy-D-xylulose 5-phosphate-binding site is contributed by lysine 126. Glutamate 127 serves as a coordination point for NADPH. Residue aspartate 151 participates in Mn(2+) binding. 1-deoxy-D-xylulose 5-phosphate is bound by residues serine 152, glutamate 153, serine 189, and histidine 212. Residue glutamate 153 coordinates Mn(2+). Glycine 218 serves as a coordination point for NADPH. Serine 225, asparagine 230, lysine 231, and glutamate 234 together coordinate 1-deoxy-D-xylulose 5-phosphate. Residue glutamate 234 coordinates Mn(2+).

The protein belongs to the DXR family. Mg(2+) is required as a cofactor. Mn(2+) serves as cofactor.

The catalysed reaction is 2-C-methyl-D-erythritol 4-phosphate + NADP(+) = 1-deoxy-D-xylulose 5-phosphate + NADPH + H(+). The protein operates within isoprenoid biosynthesis; isopentenyl diphosphate biosynthesis via DXP pathway; isopentenyl diphosphate from 1-deoxy-D-xylulose 5-phosphate: step 1/6. Its function is as follows. Catalyzes the NADPH-dependent rearrangement and reduction of 1-deoxy-D-xylulose-5-phosphate (DXP) to 2-C-methyl-D-erythritol 4-phosphate (MEP). In Prochlorococcus marinus (strain MIT 9313), this protein is 1-deoxy-D-xylulose 5-phosphate reductoisomerase.